The following is a 285-amino-acid chain: Bifunctional protein FolD (285 aa).

An NADP(+)-binding site is contributed by 166-168 (GAS).

Belongs to the tetrahydrofolate dehydrogenase/cyclohydrolase family. As to quaternary structure, homodimer.

The enzyme catalyses (6R)-5,10-methylene-5,6,7,8-tetrahydrofolate + NADP(+) = (6R)-5,10-methenyltetrahydrofolate + NADPH. It carries out the reaction (6R)-5,10-methenyltetrahydrofolate + H2O = (6R)-10-formyltetrahydrofolate + H(+). Its pathway is one-carbon metabolism; tetrahydrofolate interconversion. In terms of biological role, catalyzes the oxidation of 5,10-methylenetetrahydrofolate to 5,10-methenyltetrahydrofolate and then the hydrolysis of 5,10-methenyltetrahydrofolate to 10-formyltetrahydrofolate. This Thioalkalivibrio sulfidiphilus (strain HL-EbGR7) protein is Bifunctional protein FolD.